The sequence spans 338 residues: Electron transfer flavoprotein subunit alpha (338 aa).

275-303 (IYIACAISGAIQPLAGMTGSDCIIAINKD) is a binding site for FAD.

Belongs to the ETF alpha-subunit/FixB family. As to quaternary structure, heterodimer of an alpha and a beta subunit. It depends on FAD as a cofactor.

Its function is as follows. The electron transfer flavoprotein serves as a specific electron acceptor for other dehydrogenases. It transfers the electrons to the main respiratory chain via ETF-ubiquinone oxidoreductase (ETF dehydrogenase). The protein is Electron transfer flavoprotein subunit alpha (etfA) of Megasphaera elsdenii.